Consider the following 2476-residue polypeptide: Non-reducing polyketide synthase ausA (2476 aa).

Residues 14 to 253 (VLFGPKYPEV…HHSNHTQAVE (240 aa)) are N-terminal acylcarrier protein transacylase domain (SAT). The Ketosynthase family 3 (KS3) domain occupies 379–795 (AVPIAVTGMA…GSNAAIVLRE (417 aa)). Active-site for beta-ketoacyl synthase activity residues include Cys544, His679, and His718. A malonyl-CoA:ACP transacylase (MAT) domain region spans residues 906–1210 (ICFGGQTGDT…LPTDLSGAQA (305 aa)). Ser993 (for acyl/malonyl transferase activity) is an active-site residue. The interval 1277–1405 (QEASLVRLLR…GRVSLQAAGS (129 aa)) is N-terminal hotdog fold. The PKS/mFAS DH domain maps to 1277-1584 (QEASLVRLLR…FTGVSIQSLK (308 aa)). A product template (PT) domain region spans residues 1280–1583 (SLVRLLRQDG…TFTGVSIQSL (304 aa)). His1310 (proton acceptor; for dehydratase activity) is an active-site residue. A C-terminal hotdog fold region spans residues 1433 to 1584 (SSSGLKRSTV…FTGVSIQSLK (152 aa)). Residue Asp1491 is the Proton donor; for dehydratase activity of the active site. Residues 1626–1700 (DGDLLAVQTM…GLVQRIFPGH (75 aa)) enclose the Carrier domain. At Ser1660 the chain carries O-(pantetheine 4'-phosphoryl)serine. The tract at residues 1862–2095 (QHASEHKLLH…GFNWVDWTDN (234 aa)) is methyltransferase (CMeT) domain. A thioesterase (TE) domain region spans residues 2128–2476 (NTVQEQTVLY…YEFLRRHVGL (349 aa)). Active-site for thioesterase activity residues include Ser2251, Asp2413, and His2445.

It carries out the reaction 3 malonyl-CoA + acetyl-CoA + 2 S-adenosyl-L-methionine = 3,5-dimethylorsellinate + 2 S-adenosyl-L-homocysteine + 3 CO2 + 4 CoA. It participates in secondary metabolite biosynthesis; terpenoid biosynthesis. Functionally, non-reducing polyketide synthase; part of the gene cluster A that mediates the biosynthesis of austinol and dehydroaustinol, two fungal meroterpenoids. The first step of the pathway is the synthesis of 3,5-dimethylorsellinic acid by the polyketide synthase ausA. 3,5-dimethylorsellinic acid is then prenylated by the polyprenyl transferase ausN. Further epoxidation by the FAD-dependent monooxygenase ausM and cyclization by the probable terpene cyclase ausL lead to the formation of protoaustinoid A. Protoaustinoid A is then oxidized to spiro-lactone preaustinoid A3 by the combined action of the FAD-binding monooxygenases ausB and ausC, and the dioxygenase ausE. Acid-catalyzed keto-rearrangement and ring contraction of the tetraketide portion of preaustinoid A3 by ausJ lead to the formation of preaustinoid A4. The aldo-keto reductase ausK, with the help of ausH, is involved in the next step by transforming preaustinoid A4 into isoaustinone which is in turn hydroxylated by the P450 monooxygenase ausI to form austinolide. Finally, the cytochrome P450 monooxygenase ausG modifies austinolide to austinol. Austinol can be further modified to dehydroaustinol which forms a diffusible complex with diorcinol that initiates conidiation. Due to genetic rearrangements of the clusters and the subsequent loss of some enzymes, the end products of the Emericella nidulans austinoid biosynthesis clusters are austinol and dehydroaustinol, even if additional enzymes, such as the O-acetyltransferase ausQ and the cytochrome P450 monooxygenase ausR are still functional. This chain is Non-reducing polyketide synthase ausA, found in Emericella nidulans (strain FGSC A4 / ATCC 38163 / CBS 112.46 / NRRL 194 / M139) (Aspergillus nidulans).